A 283-amino-acid polypeptide reads, in one-letter code: Acetylglutamate kinase (283 aa).

Substrate contacts are provided by residues 63–64, arginine 85, and asparagine 178; that span reads GG.

Belongs to the acetylglutamate kinase family. ArgB subfamily.

The protein resides in the plastid. Its subcellular location is the chloroplast. It carries out the reaction N-acetyl-L-glutamate + ATP = N-acetyl-L-glutamyl 5-phosphate + ADP. It participates in amino-acid biosynthesis; L-arginine biosynthesis; N(2)-acetyl-L-ornithine from L-glutamate: step 2/4. Its function is as follows. Catalyzes the ATP-dependent phosphorylation of N-acetyl-L-glutamate. The polypeptide is Acetylglutamate kinase (Porphyra purpurea (Red seaweed)).